The following is a 196-amino-acid chain: Golgi to ER traffic protein 1 (196 aa).

Residues 1–10 are Lumenal-facing; sequence MFLDLHPYTI. Residues 11–30 form a helical membrane-spanning segment; that stretch reads LVSIFIILLVKQIVGRIGKS. The Cytoplasmic portion of the chain corresponds to 31–114; the sequence is TIQEFVWLLY…SIDKLANVLL (84 aa). Residues 76 to 114 adopt a coiled-coil conformation; it reads AKWTKLNRQADKLTSEIQKLNEEIRQSKASIDKLANVLL. Residues 115–135 form a helical membrane-spanning segment; it reads MVLTTLPIWVARIFFRKTHLF. The Lumenal segment spans residues 136–159; that stretch reads YLRSGIFPRYIEWVLALPFFPSGA. The chain crosses the membrane as a helical span at residues 160-176; sequence VGLTVWMFAANSVIHNV. At 177-196 the chain is on the cytoplasmic side; the sequence is ISLVSFAFEKRVEKPVRQKK.

The protein belongs to the WRB/GET1 family. As to quaternary structure, component of the Golgi to ER traffic (GET) complex, which is composed of GET1, GET2 and GET3. Within the complex, GET1 and GET2 form a heterotetramer which is stabilized by phosphatidylinositol binding and which binds to the GET3 homodimer.

The protein resides in the endoplasmic reticulum membrane. The protein localises to the golgi apparatus membrane. In terms of biological role, required for the post-translational delivery of tail-anchored (TA) proteins to the endoplasmic reticulum. Together with GET2, acts as a membrane receptor for soluble GET3, which recognizes and selectively binds the transmembrane domain of TA proteins in the cytosol. The GET complex cooperates with the HDEL receptor ERD2 to mediate the ATP-dependent retrieval of resident ER proteins that contain a C-terminal H-D-E-L retention signal from the Golgi to the ER. The polypeptide is Golgi to ER traffic protein 1 (Candida tropicalis (strain ATCC MYA-3404 / T1) (Yeast)).